Reading from the N-terminus, the 345-residue chain is Isocitrate lyase (345 aa).

Residue 58–60 (SGY) coordinates substrate. Position 98 (Asp-98) interacts with Mg(2+). Cys-135 serves as the catalytic Proton acceptor. Residues 136 to 137 (GH), Arg-170, 230 to 234 (NYSSS), and Thr-260 each bind substrate. The disordered stretch occupies residues 318-345 (DPEARRRIEESEGFSEEQADPITSNDDD). Acidic residues predominate over residues 328–345 (SEGFSEEQADPITSNDDD).

Homotetramer or homotrimer. It depends on Mg(2+) as a cofactor.

It carries out the reaction D-threo-isocitrate = glyoxylate + succinate. Its pathway is carbohydrate metabolism; glyoxylate cycle; (S)-malate from isocitrate: step 1/2. Its function is as follows. Involved in the metabolic adaptation in response to environmental changes. Catalyzes the reversible formation of succinate and glyoxylate from isocitrate, a key step of the glyoxylate cycle, which operates as an anaplerotic route for replenishing the tricarboxylic acid cycle during growth on fatty acid substrates. The polypeptide is Isocitrate lyase (aceA) (Haloferax volcanii (strain ATCC 29605 / DSM 3757 / JCM 8879 / NBRC 14742 / NCIMB 2012 / VKM B-1768 / DS2) (Halobacterium volcanii)).